A 273-amino-acid polypeptide reads, in one-letter code: Undecaprenyl-diphosphatase (273 aa).

Transmembrane regions (helical) follow at residues 7-27, 45-65, 89-109, 115-135, 152-171, 189-209, 221-241, and 253-273; these read LWIA…PVSS, AETF…VMFW, LTLI…LLLH, LFNP…LIAA, TYRQ…WPGF, YAAS…ATGL, ADFP…LIAI, and FIPF…LFVL.

The protein belongs to the UppP family.

It localises to the cell inner membrane. The catalysed reaction is di-trans,octa-cis-undecaprenyl diphosphate + H2O = di-trans,octa-cis-undecaprenyl phosphate + phosphate + H(+). Functionally, catalyzes the dephosphorylation of undecaprenyl diphosphate (UPP). Confers resistance to bacitracin. The protein is Undecaprenyl-diphosphatase of Erwinia tasmaniensis (strain DSM 17950 / CFBP 7177 / CIP 109463 / NCPPB 4357 / Et1/99).